The chain runs to 173 residues: Cytochrome c-type biogenesis protein CcmE (173 aa).

The Cytoplasmic portion of the chain corresponds to 1-8 (MNPRRKSR). Residues 9-29 (FKLVIFVVLGIAIASGLMLYA) traverse the membrane as a helical; Signal-anchor for type II membrane protein segment. Residues 30–173 (LRQNIDLFYT…RDRQEKEGAK (144 aa)) are Periplasmic-facing. The heme site is built by His131 and Tyr135. The segment at 152 to 173 (GIEAADLKGESARDRQEKEGAK) is disordered. Over residues 156–173 (ADLKGESARDRQEKEGAK) the composition is skewed to basic and acidic residues.

The protein belongs to the CcmE/CycJ family.

It is found in the cell inner membrane. In terms of biological role, heme chaperone required for the biogenesis of c-type cytochromes. Transiently binds heme delivered by CcmC and transfers the heme to apo-cytochromes in a process facilitated by CcmF and CcmH. This is Cytochrome c-type biogenesis protein CcmE from Haemophilus influenzae (strain ATCC 51907 / DSM 11121 / KW20 / Rd).